The following is a 431-amino-acid chain: MATCLRGITKRVNLLQRRVYPSCGHLIRDDRDETKSGSSDTMIREVLARNGTNKLSSMFADRHYQSFATGPLGLGLSSCRHMSSTPPEWSDKVDGIDFVATEVVPDEIIEAVTTTSQAVVPAINEVAIAAADSAFPVAALQHLIDAVHSFTGLNWWASIALTTVLIRGVTIPILLNQLKATYKLNVLRPQLEELRQEMSTKAQDPEAMAEGQRRMQLLFKEHGVTPFTPLKGLIIQGPIFISFFFAIRNMAEKVPSFKTGGTLWFTDLTTTDTTYILPLLTAVTFLIMVESNMQEGLEGNPVAGTMKKFSRIIAFLSIPVLIGIEKALFCYWLTSNLFTLVYGLTLRRPDVRKLLNLPDVVNSSTRQPSPSSPLPFSFAEPKDQSVVAQEKPPMSSESSSSVPDRRISRSSVLNQRIRTLERQLKDRKIKK.

The transit peptide at M1 to S22 directs the protein to the mitochondrion. A run of 5 helical transmembrane segments spans residues V119–A139, W155–L175, F227–I247, T269–V289, and I312–W332. The interval N362 to N414 is disordered. Positions P392 to V402 are enriched in low complexity.

Belongs to the OXA1/ALB3/YidC (TC 2.A.9.2) family.

It is found in the mitochondrion inner membrane. Its function is as follows. Probably required for the insertion of integral membrane proteins into the mitochondrial inner membrane. May participate in the activity and assembly of cytochrome oxidase. This Arabidopsis thaliana (Mouse-ear cress) protein is Mitochondrial inner membrane protein OXA1-like (OXA1L).